We begin with the raw amino-acid sequence, 513 residues long: Sugar transport protein MST8 (513 aa).

Topologically, residues 1–17 (MAGGAMTDTDGAHKNYP) are cytoplasmic. Residues 18–38 (GKMTIFVFLACLVASSGGLIF) traverse the membrane as a helical segment. Over 39–81 (GYDIGISGGVTSMDSFLIKFFPSVYAKEKEMVETNQYCKFDSE) the chain is Extracellular. The helical transmembrane segment at 82 to 102 (LLTLFTSSLYLAALIASLFAS) threads the bilayer. At 103-116 (VITRKFGRRITMLG) the chain is on the cytoplasmic side. A helical transmembrane segment spans residues 117-137 (GGVIFLVGAILNGAAADVAML). The Extracellular segment spans residues 138–139 (II). The helical transmembrane segment at 140–160 (GRILLGIGVGFSNQAVPLYLS) threads the bilayer. The Cytoplasmic segment spans residues 161–166 (EMAPAR). Residues 167–187 (MRGMLNISFQLMITVGILAAN) traverse the membrane as a helical segment. Over 188 to 201 (LINYFTDKIAGGWG) the chain is Extracellular. Residues 202-222 (WRVSLGLAAVPAVIMAGGSLF) form a helical membrane-spanning segment. Topologically, residues 223-294 (LPDTPNSLLS…LVMSVLIPTL (72 aa)) are cytoplasmic. Residues 295-315 (QQLTGINVVMFYAPVLFKTIG) form a helical membrane-spanning segment. Residues 316–320 (FGGTA) are Extracellular-facing. Residues 321 to 341 (SLMSAVITGLVNMFATFVSIA) form a helical membrane-spanning segment. Topologically, residues 342-347 (TVDRLG) are cytoplasmic. The chain crosses the membrane as a helical span at residues 348-368 (RRKLLLQGGVQMIFAQFILGT). Residues 369–385 (LIAVKFGTAGVANISRG) lie on the Extracellular side of the membrane. A helical transmembrane segment spans residues 386 to 406 (YAIVVVLCICVFVSAFAWSWG). Topologically, residues 407–425 (PLGWLVPSEIFPLEIRSAA) are cytoplasmic. A helical transmembrane segment spans residues 426 to 446 (QSVVVVFNMAFTFIIAQIFLM). The Extracellular segment spans residues 447–450 (MLCH). A helical membrane pass occupies residues 451–471 (LKFGLFYFFGAMELIMTGFVF). The Cytoplasmic segment spans residues 472-512 (FFLPETKGIPIEEMDRIWGKHWYWRRFVGAGAGGKVEITST).

It belongs to the major facilitator superfamily. Sugar transporter (TC 2.A.1.1) family. Expressed specifically in anthers.

Its subcellular location is the membrane. Functionally, mediates active uptake of hexoses by sugar:proton symport. May play an important role in transporting monosaccharides during anther development. This chain is Sugar transport protein MST8, found in Oryza sativa subsp. japonica (Rice).